We begin with the raw amino-acid sequence, 312 residues long: Zinc-finger homeodomain protein 9 (312 aa).

Residues Met1 to Ala27 form a disordered region. At Ser13 the chain carries Phosphoserine. The ZF-HD dimerization-type; degenerate zinc-finger motif lies at Tyr52 to Glu103. Disordered regions lie at residues Gln128–Ile155 and Phe253–Ser312. Residues Pro136 to Ile155 show a composition bias toward pro residues. Residues Arg192 to Gly255 constitute a DNA-binding region (homeobox). The residue at position 273 (Ser273) is a Phosphoserine.

In terms of assembly, homo- and heterodimer with other ZFHD proteins. Interacts with MIF3; this interaction prevents nuclear localization and DNA-binding to inhibit transcription regulation activity. Binds to ZHD1, ZHD2 and ZHD11. Mostly expressed in flowers, stems and inflorescence and, to a lower extent, in leaves and stems.

It localises to the nucleus. Putative transcription factor. The chain is Zinc-finger homeodomain protein 9 (ZHD9) from Arabidopsis thaliana (Mouse-ear cress).